Here is an 896-residue protein sequence, read N- to C-terminus: UPF0182 protein GM21_2279 (896 aa).

The next 7 helical transmembrane spans lie at 6 to 26 (MTFI…LLSF), 46 to 66 (VYAQ…FLQL), 99 to 119 (LVRP…GNWG), 158 to 180 (LLKS…AYYV), 201 to 221 (LAVL…LESF), 245 to 265 (TLRI…LGIW), and 271 to 291 (LALG…RVYP).

The protein belongs to the UPF0182 family.

The protein resides in the cell membrane. The sequence is that of UPF0182 protein GM21_2279 from Geobacter sp. (strain M21).